The primary structure comprises 328 residues: Probable magnesium transporter NIPA6 (328 aa).

Residues 1–4 lie on the Extracellular side of the membrane; the sequence is METD. A helical transmembrane segment spans residues 5–25; it reads NGKGLILAVASSVFIGSSFIL. Topologically, residues 26–51 are cytoplasmic; it reads KKKGLKRAGAIGTRAGYGGYTYLLEP. A helical membrane pass occupies residues 52 to 72; the sequence is LWWAGMVTMIVGEAANFVAYI. Residues 73–76 lie on the Extracellular side of the membrane; that stretch reads YAPA. Residues 77–97 traverse the membrane as a helical segment; sequence VLVTPLGALSIIISAVLAHFL. Over 98 to 104 the chain is Cytoplasmic; the sequence is LKEKLKK. A helical transmembrane segment spans residues 105–125; sequence MGVLGCVSCIVGSVVIVIHAP. Topologically, residues 126–142 are extracellular; that stretch reads KEQTPNSVEEIWNLATQ. A helical membrane pass occupies residues 143-163; it reads PAFLIYVAITMSIVLALILHF. Residues 164 to 175 are Cytoplasmic-facing; sequence EPLCGQTNILVY. The chain crosses the membrane as a helical span at residues 176 to 196; the sequence is IGICSLMGALTVMSIKAIGIA. Over 197 to 209 the chain is Extracellular; sequence IKLTMEGVSQIGY. The helical transmembrane segment at 210-230 threads the bilayer; it reads PQTWLFVMVAVTCVVTQLIYL. The Cytoplasmic portion of the chain corresponds to 231–240; the sequence is NKALDTFNAA. Residues 241 to 261 traverse the membrane as a helical segment; sequence IVSPVYYVMFTTLTIVASAIM. At 262 to 269 the chain is on the extracellular side; sequence FKDWSGQD. The chain crosses the membrane as a helical span at residues 270-290; the sequence is AASVASELCGFITVLTGTMIL. Topologically, residues 291-328 are cytoplasmic; it reads HGTREEEQQQASSEHVRWYDSRKSMNEEHLVSLYSPEY.

The protein belongs to the NIPA (TC 2.A.7) family. Homodimer.

It localises to the cell membrane. The protein localises to the early endosome. Functionally, acts as a Mg(2+) transporter. Can also transport other divalent cations such as Fe(2+), Sr(2+), Ba(2+), Mn(2+) and Co(2+) but to a much less extent than Mg(2+). This Arabidopsis thaliana (Mouse-ear cress) protein is Probable magnesium transporter NIPA6.